The chain runs to 347 residues: RNA 3'-terminal phosphate cyclase (347 aa).

ATP contacts are provided by residues Gln109 and 290 to 294; that span reads YLADQ. His315 acts as the Tele-AMP-histidine intermediate in catalysis.

It belongs to the RNA 3'-terminal cyclase family. Type 1 subfamily.

It localises to the cytoplasm. It catalyses the reaction a 3'-end 3'-phospho-ribonucleotide-RNA + ATP = a 3'-end 2',3'-cyclophospho-ribonucleotide-RNA + AMP + diphosphate. Catalyzes the conversion of 3'-phosphate to a 2',3'-cyclic phosphodiester at the end of RNA. The mechanism of action of the enzyme occurs in 3 steps: (A) adenylation of the enzyme by ATP; (B) transfer of adenylate to an RNA-N3'P to produce RNA-N3'PP5'A; (C) and attack of the adjacent 2'-hydroxyl on the 3'-phosphorus in the diester linkage to produce the cyclic end product. The biological role of this enzyme is unknown but it is likely to function in some aspects of cellular RNA processing. The sequence is that of RNA 3'-terminal phosphate cyclase from Ralstonia nicotianae (strain ATCC BAA-1114 / GMI1000) (Ralstonia solanacearum).